Here is a 366-residue protein sequence, read N- to C-terminus: GTPase Obg (366 aa).

The Obg domain occupies Met-1–Leu-162. Residues Ala-163 to Asp-335 enclose the OBG-type G domain. GTP contacts are provided by residues Gly-169–Ser-176, Phe-194–Thr-198, Asp-218–Gly-221, Asn-288–Asp-291, and Ser-316–Met-318. Ser-176 and Thr-196 together coordinate Mg(2+).

Belongs to the TRAFAC class OBG-HflX-like GTPase superfamily. OBG GTPase family. Monomer. Requires Mg(2+) as cofactor.

The protein localises to the cytoplasm. In terms of biological role, an essential GTPase which binds GTP, GDP and possibly (p)ppGpp with moderate affinity, with high nucleotide exchange rates and a fairly low GTP hydrolysis rate. Plays a role in control of the cell cycle, stress response, ribosome biogenesis and in those bacteria that undergo differentiation, in morphogenesis control. The protein is GTPase Obg of Nitratidesulfovibrio vulgaris (strain ATCC 29579 / DSM 644 / CCUG 34227 / NCIMB 8303 / VKM B-1760 / Hildenborough) (Desulfovibrio vulgaris).